The following is a 251-amino-acid chain: Pyrroloquinoline-quinone synthase (251 aa).

It belongs to the PqqC family.

It catalyses the reaction 6-(2-amino-2-carboxyethyl)-7,8-dioxo-1,2,3,4,7,8-hexahydroquinoline-2,4-dicarboxylate + 3 O2 = pyrroloquinoline quinone + 2 H2O2 + 2 H2O + H(+). The protein operates within cofactor biosynthesis; pyrroloquinoline quinone biosynthesis. In terms of biological role, ring cyclization and eight-electron oxidation of 3a-(2-amino-2-carboxyethyl)-4,5-dioxo-4,5,6,7,8,9-hexahydroquinoline-7,9-dicarboxylic-acid to PQQ. The sequence is that of Pyrroloquinoline-quinone synthase from Pseudomonas putida (strain W619).